Consider the following 651-residue polypeptide: LEAF RUST 10 DISEASE-RESISTANCE LOCUS RECEPTOR-LIKE PROTEIN KINASE-like 1.2 (651 aa).

An N-terminal signal peptide occupies residues Met-1–Ser-26. Residues Leu-27–Lys-264 are Extracellular-facing. N-linked (GlcNAc...) asparagine glycans are attached at residues Asn-88, Asn-114, Asn-130, Asn-136, Asn-155, Asn-193, and Asn-213. Residues Val-265–Val-285 traverse the membrane as a helical segment. At Tyr-286–Lys-651 the chain is on the cytoplasmic side. The 273-residue stretch at Phe-341–Leu-613 folds into the Protein kinase domain. ATP is bound by residues Leu-347 to Val-355 and Lys-369. Residue Tyr-415 is modified to Phosphotyrosine. Asp-465 serves as the catalytic Proton acceptor. At Ser-498 the chain carries Phosphoserine. Thr-499 and Thr-504 each carry phosphothreonine. Phosphotyrosine is present on Tyr-512.

Belongs to the protein kinase superfamily. Ser/Thr protein kinase family.

The protein localises to the cell membrane. It localises to the membrane. The enzyme catalyses L-seryl-[protein] + ATP = O-phospho-L-seryl-[protein] + ADP + H(+). The catalysed reaction is L-threonyl-[protein] + ATP = O-phospho-L-threonyl-[protein] + ADP + H(+). Functionally, probable receptor-like serine/threonine-protein kinase involved in abscisic acid (ABA) signaling. Acts as a positive regulator of abiotic stress response. The sequence is that of LEAF RUST 10 DISEASE-RESISTANCE LOCUS RECEPTOR-LIKE PROTEIN KINASE-like 1.2 from Arabidopsis thaliana (Mouse-ear cress).